A 234-amino-acid polypeptide reads, in one-letter code: Ribose-5-phosphate isomerase A (234 aa).

Substrate is bound by residues Thr39 to Thr42, Asp92 to Asp95, and Lys105 to Gly108. The active-site Proton acceptor is Glu114. Lys132 lines the substrate pocket.

The protein belongs to the ribose 5-phosphate isomerase family. As to quaternary structure, homodimer.

It catalyses the reaction aldehydo-D-ribose 5-phosphate = D-ribulose 5-phosphate. It participates in carbohydrate degradation; pentose phosphate pathway; D-ribose 5-phosphate from D-ribulose 5-phosphate (non-oxidative stage): step 1/1. Its function is as follows. Catalyzes the reversible conversion of ribose-5-phosphate to ribulose 5-phosphate. The polypeptide is Ribose-5-phosphate isomerase A (Albidiferax ferrireducens (strain ATCC BAA-621 / DSM 15236 / T118) (Rhodoferax ferrireducens)).